The following is a 2135-amino-acid chain: Nonribosomal peptide synthetase gliP (2135 aa).

Residues 34 to 424 (TYTELDVASS…LPADVEEPLR (391 aa)) form an adenylation 1 region. The 76-residue stretch at 519-594 (TEREQVIAEC…GILPYARDLA (76 aa)) folds into the Carrier 1 domain. O-(pantetheine 4'-phosphoryl)serine is present on serine 555. The interval 663–913 (AEHICNAWRQ…MATLPLVCRI (251 aa)) is condensation 1. The adenylation 2 stretch occupies residues 1078–1458 (YRELDQKSNA…YQEEPRLTQA (381 aa)). The Carrier 2 domain maps to 1544–1622 (ASIADGIATL…EQVELVRRKR (79 aa)). Serine 1582 carries the O-(pantetheine 4'-phosphoryl)serine modification. Residues 1642-1905 (SPLERQTWFQ…FLDRLPLRFK (264 aa)) are condensation 2. In terms of domain architecture, Carrier 3 spans 2061-2134 (RRLVGILQRE…DLAQRLYRQV (74 aa)). Serine 2095 carries the post-translational modification O-(pantetheine 4'-phosphoryl)serine.

This sequence belongs to the NRP synthetase family.

Its pathway is mycotoxin biosynthesis. In terms of biological role, nonribosomal peptide synthetase; part of the gene cluster that mediates the biosynthesis of gliotoxin, a member of the epipolythiodioxopiperazine (ETP) class of toxins characterized by a disulfide-bridged cyclic dipeptide. The first step in gliotoxin biosynthesis is the condensation of serine and phenylalanine to form the cyclo-L-phenylalanyl-L-serine diketopiperazine (DKP) by the NRPS gliP. GliP is also able to produce the DKP cyclo-L-tryptophanyl-L-serine, suggesting that the substrate specificity of the first adenylation (A) domain in gliP is sufficiently relaxed to accommodate both L-Phe and L-Trp. The cytochrome P450 monooxygenase gliC has been shown to catalyze the subsequent hydroxylation of the alpha-carbon of L-Phe in cyclo-L-phenylalanyl-L-serine whereas the second cytochrome P450 enzyme, gliF, is presumably involved in the modification of the DKP side chain. The glutathione S-transferase (GST) gliG then forms a bis-glutathionylated biosynthetic intermediate which is responsible for the sulfurization of gliotoxin. This bis-glutathionylated intermediate is subsequently processed by the gamma-glutamyl cyclotransferase gliK to remove both gamma-glutamyl moieties. Subsequent processing via gliI yields a biosynthetic intermediate, which is N-methylated via the N-methyltransferase gliN, before the gliotoxin oxidoreductase gliT-mediated disulfide bridge closure. GliN-mediated amide methylation confers stability to ETP, damping the spontaneous formation of tri- and tetrasulfides. Intracellular dithiol gliotoxin oxidized by gliT is subsequently effluxed by gliA. Gliotoxin contributes to pathogenesis during invasive aspergillosis. In macrophages and neutrophils, gliotoxin showed inhibition of various different cell functions including cytokine production, antigen presentation, phagocytosis, and production of reactive oxygen species. The protein is Nonribosomal peptide synthetase gliP of Aspergillus fumigatus (strain ATCC MYA-4609 / CBS 101355 / FGSC A1100 / Af293) (Neosartorya fumigata).